Consider the following 448-residue polypeptide: Tubulin beta-1 chain (448 aa).

GTP contacts are provided by Gln-11, Glu-69, Ser-138, Gly-142, Thr-143, Gly-144, Asn-204, and Asn-226. Glu-69 is a Mg(2+) binding site. The segment at Asp-427–Glu-448 is disordered. The span at Thr-429 to Glu-448 shows a compositional bias: acidic residues.

Belongs to the tubulin family. Dimer of alpha and beta chains. A typical microtubule is a hollow water-filled tube with an outer diameter of 25 nm and an inner diameter of 15 nM. Alpha-beta heterodimers associate head-to-tail to form protofilaments running lengthwise along the microtubule wall with the beta-tubulin subunit facing the microtubule plus end conferring a structural polarity. Microtubules usually have 13 protofilaments but different protofilament numbers can be found in some organisms and specialized cells. Mg(2+) serves as cofactor.

Its subcellular location is the cytoplasm. The protein localises to the cytoskeleton. Functionally, tubulin is the major constituent of microtubules, a cylinder consisting of laterally associated linear protofilaments composed of alpha- and beta-tubulin heterodimers. Microtubules grow by the addition of GTP-tubulin dimers to the microtubule end, where a stabilizing cap forms. Below the cap, tubulin dimers are in GDP-bound state, owing to GTPase activity of alpha-tubulin. The polypeptide is Tubulin beta-1 chain (Brugia pahangi (Filarial nematode worm)).